Here is a 310-residue protein sequence, read N- to C-terminus: Protein CUP-SHAPED COTYLEDON 1 (310 aa).

Residues 20–172 (MPPGFRFHPT…EWVLCKVCLK (153 aa)) enclose the NAC domain. The DNA-binding element occupies 119–178 (LGMKKTLVFYKGRAPKGEKSCWVMHEYRLDGKFSYHYISSSAKDEWVLCKVCLKSGVVSR). Involved in transactivation activity stretches follow at residues 179-210 (ETNL…NTFA) and 306-310 (WPFTL).

In terms of tissue distribution, expressed in inflorescence stems, rosette leaves, aerial parts of seedlings, flowers, floral buds and roots.

The protein resides in the nucleus. In terms of biological role, transcription activator of STM and KNAT6. Involved in molecular mechanisms regulating shoot apical meristem (SAM) formation during embryogenesis and organ separation. Required for the fusion of septa of gynoecia along the length of the ovaries. Activates the shoot formation in callus in a STM-dependent manner. Seems to act as an inhibitor of cell division. This chain is Protein CUP-SHAPED COTYLEDON 1 (NAC054), found in Arabidopsis thaliana (Mouse-ear cress).